The chain runs to 149 residues: UPF0306 protein PM1958 (149 aa).

It belongs to the UPF0306 family.

The chain is UPF0306 protein PM1958 from Pasteurella multocida (strain Pm70).